Consider the following 431-residue polypeptide: Foot protein 1 variant 2 (431 aa).

The signal sequence occupies residues Met-1 to Ala-20. Position 22 is a 3',4'-dihydroxyphenylalanine (Tyr-22). The residue at position 33 (Pro-33) is a 4-hydroxyproline. Residues Val-41–Lys-50 form an A-1; approximate repeat. The tract at residues Val-41–Lys-270 is 13 X 10 AA A-P-P-P-A-W-T-A-W-K. Trp-46, Trp-49, Trp-56, and Trp-59 each carry 7'-hydroxytryptophan. Trp-46, Trp-49, Trp-56, and Trp-59 each carry a C-linked (Man) hydroxytryptophan glycan. The A-2; approximate repeat unit spans residues Ala-51–Lys-60. A B-1 repeat occupies Ala-61–Lys-70. Positions Ala-61–Arg-310 are 27 X 10 AA A-T-P-K-P-W-T-A-W-K. Pro-65 is modified (4-hydroxyproline). C-linked (Man) tryptophan glycosylation occurs at Trp-66. Residue Trp-69 is modified to 7'-hydroxytryptophan. A glycan (C-linked (Man) hydroxytryptophan) is linked at Trp-69. The A-3 repeat unit spans residues Ala-71 to Lys-80. 4-hydroxyproline is present on residues Pro-72, Pro-73, and Pro-74. A 7'-hydroxytryptophan mark is found at Trp-76 and Trp-79. C-linked (Man) hydroxytryptophan glycosylation is found at Trp-76 and Trp-79. The stretch at Ala-81 to Lys-90 is one B-2 repeat. Position 85 is a 4-hydroxyproline (Pro-85). The C-linked (Man) tryptophan glycan is linked to Trp-86. At Trp-89 the chain carries 7'-hydroxytryptophan. The C-linked (Man) hydroxytryptophan glycan is linked to Trp-89. An A-4; approximate repeat occupies Ala-91–Lys-100. 3 positions are modified to 4-hydroxyproline: Pro-92, Pro-93, and Pro-94. Residues Trp-96 and Trp-99 each carry the 7'-hydroxytryptophan modification. C-linked (Man) hydroxytryptophan glycans are attached at residues Trp-96 and Trp-99. The B-3 repeat unit spans residues Ala-101–Lys-110. Pro-105 carries the 4-hydroxyproline modification. C-linked (Man) tryptophan glycosylation occurs at Trp-106. Trp-109 is subject to 7'-hydroxytryptophan. Trp-109 carries C-linked (Man) hydroxytryptophan glycosylation. One copy of the A-5; approximate repeat lies at Ala-111 to Lys-120. 4-hydroxyproline occurs at positions 112, 113, and 114. Trp-116 and Trp-119 each carry 7'-hydroxytryptophan. C-linked (Man) hydroxytryptophan glycosylation is found at Trp-116 and Trp-119. Residues Ala-121 to Lys-130 form a B-4; approximate repeat. Pro-125 is modified (4-hydroxyproline). Trp-129 is subject to 7'-hydroxytryptophan. Trp-129 carries a C-linked (Man) hydroxytryptophan glycan. Residues Ala-131 to Lys-140 form an A-6; approximate repeat. A 4-hydroxyproline mark is found at Pro-132, Pro-133, and Pro-134. A 7'-hydroxytryptophan mark is found at Trp-136 and Trp-139. Residues Trp-136 and Trp-139 are each glycosylated (C-linked (Man) hydroxytryptophan). The stretch at Ala-141 to Lys-150 is one B-5; approximate repeat. Pro-145 carries the 4-hydroxyproline modification. The C-linked (Man) tryptophan glycan is linked to Trp-146. At Trp-149 the chain carries 7'-hydroxytryptophan. Residue Trp-149 is glycosylated (C-linked (Man) hydroxytryptophan). Residues Ala-151–Lys-160 form a B-6 repeat. At Pro-155 the chain carries 4-hydroxyproline. C-linked (Man) tryptophan glycosylation is present at Trp-156. Trp-159 bears the 7'-hydroxytryptophan mark. Trp-159 is a glycosylation site (C-linked (Man) hydroxytryptophan). An A-7 repeat occupies Ala-161 to Lys-170. Pro-162, Pro-163, and Pro-164 each carry 4-hydroxyproline. Trp-166 and Trp-169 each carry 7'-hydroxytryptophan. Trp-166 and Trp-169 each carry a C-linked (Man) hydroxytryptophan glycan. A B-7 repeat occupies Ala-171 to Lys-180. At Pro-175 the chain carries 4-hydroxyproline. Trp-176 is a glycosylation site (C-linked (Man) tryptophan). Trp-179 carries the post-translational modification 7'-hydroxytryptophan. Trp-179 carries C-linked (Man) hydroxytryptophan glycosylation. The B-8 repeat unit spans residues Ala-181–Lys-190. 4-hydroxyproline is present on Pro-185. Trp-186 carries a C-linked (Man) tryptophan glycan. Trp-189 is subject to 7'-hydroxytryptophan. Trp-189 is a glycosylation site (C-linked (Man) hydroxytryptophan). One copy of the B-9 repeat lies at Ala-191 to Lys-200. Pro-195 carries the 4-hydroxyproline modification. Trp-196 carries a C-linked (Man) tryptophan glycan. Trp-199 carries the 7'-hydroxytryptophan modification. A glycan (C-linked (Man) hydroxytryptophan) is linked at Trp-199. A B-10; approximate repeat occupies Ala-201–Lys-210. 4-hydroxyproline is present on Pro-205. A C-linked (Man) tryptophan glycan is attached at Trp-206. Trp-209 is modified (7'-hydroxytryptophan). Trp-209 carries a C-linked (Man) hydroxytryptophan glycan. One copy of the B-11 repeat lies at Ala-211 to Lys-220. The residue at position 215 (Pro-215) is a 4-hydroxyproline. The C-linked (Man) tryptophan glycan is linked to Trp-216. Trp-219 is modified (7'-hydroxytryptophan). A glycan (C-linked (Man) hydroxytryptophan) is linked at Trp-219. The A-8 repeat unit spans residues Ala-221–Lys-230. 4-hydroxyproline occurs at positions 222, 223, and 224. Residues Trp-226 and Trp-229 each carry the 7'-hydroxytryptophan modification. Trp-226 and Trp-229 each carry a C-linked (Man) hydroxytryptophan glycan. A B-12 repeat occupies Ala-231–Lys-240. Residue Pro-235 is modified to 4-hydroxyproline. C-linked (Man) tryptophan glycosylation occurs at Trp-236. A 7'-hydroxytryptophan modification is found at Trp-239. Trp-239 is a glycosylation site (C-linked (Man) hydroxytryptophan). An A-9 repeat occupies Ala-241–Lys-250. 3 positions are modified to 4-hydroxyproline: Pro-242, Pro-243, and Pro-244. 7'-hydroxytryptophan occurs at positions 246 and 249. C-linked (Man) hydroxytryptophan glycosylation is found at Trp-246 and Trp-249. One copy of the B-13 repeat lies at Ala-251–Lys-260. A 4-hydroxyproline modification is found at Pro-255. A C-linked (Man) tryptophan glycan is attached at Trp-256. Trp-259 is subject to 7'-hydroxytryptophan. Trp-259 is a glycosylation site (C-linked (Man) hydroxytryptophan). Residues Ala-261–Lys-270 form an A-10 repeat. Residues Pro-262, Pro-263, and Pro-264 each carry the 4-hydroxyproline modification. Residues Trp-266 and Trp-269 each carry the 7'-hydroxytryptophan modification. Trp-266 and Trp-269 each carry a C-linked (Man) hydroxytryptophan glycan. The stretch at Ala-271–Lys-280 is one B-14 repeat. Pro-275 carries the post-translational modification 4-hydroxyproline. A C-linked (Man) tryptophan glycan is attached at Trp-276. A 7'-hydroxytryptophan modification is found at Trp-279. Trp-279 is a glycosylation site (C-linked (Man) hydroxytryptophan). The B-15 repeat unit spans residues Ala-281 to Lys-290. Pro-285 carries the 4-hydroxyproline modification. C-linked (Man) tryptophan glycosylation is present at Trp-286. Trp-289 carries the 7'-hydroxytryptophan modification. Residue Trp-289 is glycosylated (C-linked (Man) hydroxytryptophan). One copy of the B-16 repeat lies at Ala-291–Lys-300. Pro-295 carries the 4-hydroxyproline modification. Trp-296 is a glycosylation site (C-linked (Man) tryptophan). Trp-299 is modified (7'-hydroxytryptophan). Residue Trp-299 is glycosylated (C-linked (Man) hydroxytryptophan). The stretch at Ala-301–Arg-310 is one B-17; approximate repeat. The residue at position 305 (Pro-305) is a 4-hydroxyproline. C-linked (Man) tryptophan glycosylation is present at Trp-306. Trp-309 is subject to 7'-hydroxytryptophan. Residue Trp-309 is glycosylated (C-linked (Man) hydroxytryptophan). Positions Gly-322 to Gly-377 are disordered. A compositionally biased stretch (gly residues) spans His-323–Gly-332. The Collagen-like domain occupies Gly-329–Gly-380. Positions Lys-336–Pro-366 are enriched in low complexity. A 4-hydroxyproline mark is found at Pro-367, Pro-370, and Pro-376.

Produced by the byssal gland.

It is found in the secreted. Functionally, provides adhesiveness to the mussel's foot. Mussels produce one of the strongest water insoluble glues. The mussel's adhesive is a bundle of threads, called a byssus, formed by a fibrous collagenous core coated with adhesive proteins. This chain is Foot protein 1 variant 2, found in Perna viridis (Asian green mussel).